The sequence spans 195 residues: MPKLGMREIRRAQLIDATLLTIDQTGLAGTTLASVAQRASISTGIVSHYFGDKDGLLEATMRHVLRDLWQATSRRRRAARADPRSKLRAVVAANFDAEQTSGPVMKTWLAFWSESMHKPQLRRLQHVNTRRLYSNLCADFSKALPRAAARRAASGLAALIDGLWLRGALSGEPFDTKAALRTANDYIDLVLASRE.

Residues 8-68 (EIRRAQLIDA…ATMRHVLRDL (61 aa)) enclose the HTH tetR-type domain. The H-T-H motif DNA-binding region spans 31-50 (TLASVAQRASISTGIVSHYF).

Its pathway is amine and polyamine biosynthesis; betaine biosynthesis via choline pathway [regulation]. Functionally, repressor involved in the biosynthesis of the osmoprotectant glycine betaine. It represses transcription of the choline transporter BetT and the genes of BetAB involved in the synthesis of glycine betaine. This is HTH-type transcriptional regulator BetI from Paraburkholderia xenovorans (strain LB400).